Reading from the N-terminus, the 332-residue chain is Eukaryotic translation initiation factor 3 subunit I (332 aa).

WD repeat units follow at residues 8–47 (GHER…GTYH), 48–87 (GHQG…LLHT), 144–182 (DESK…LLSS), and 279–318 (GHFG…FDFM).

Belongs to the eIF-3 subunit I family. As to quaternary structure, component of the eukaryotic translation initiation factor 3 (eIF-3) complex.

It localises to the cytoplasm. Component of the eukaryotic translation initiation factor 3 (eIF-3) complex, which is involved in protein synthesis of a specialized repertoire of mRNAs and, together with other initiation factors, stimulates binding of mRNA and methionyl-tRNAi to the 40S ribosome. The eIF-3 complex specifically targets and initiates translation of a subset of mRNAs involved in cell proliferation. In Phaeosphaeria nodorum (strain SN15 / ATCC MYA-4574 / FGSC 10173) (Glume blotch fungus), this protein is Eukaryotic translation initiation factor 3 subunit I.